The chain runs to 217 residues: Peptide methionine sulfoxide reductase MsrA (217 aa).

Residue Cys56 is part of the active site.

It belongs to the MsrA Met sulfoxide reductase family.

The catalysed reaction is L-methionyl-[protein] + [thioredoxin]-disulfide + H2O = L-methionyl-(S)-S-oxide-[protein] + [thioredoxin]-dithiol. The enzyme catalyses [thioredoxin]-disulfide + L-methionine + H2O = L-methionine (S)-S-oxide + [thioredoxin]-dithiol. In terms of biological role, has an important function as a repair enzyme for proteins that have been inactivated by oxidation. Catalyzes the reversible oxidation-reduction of methionine sulfoxide in proteins to methionine. This is Peptide methionine sulfoxide reductase MsrA from Corynebacterium glutamicum (strain R).